We begin with the raw amino-acid sequence, 553 residues long: Membrane protein insertase YidC (553 aa).

5 helical membrane-spanning segments follow: residues 7-24, 365-385, 435-455, 474-494, and 509-529; these read VLWV…DNWQ, WGWA…PLSA, LPVV…LASV, PFFI…SLNP, and PIAF…YYVV.

The protein belongs to the OXA1/ALB3/YidC family. Type 1 subfamily. In terms of assembly, interacts with the Sec translocase complex via SecD. Specifically interacts with transmembrane segments of nascent integral membrane proteins during membrane integration.

It localises to the cell inner membrane. In terms of biological role, required for the insertion and/or proper folding and/or complex formation of integral membrane proteins into the membrane. Involved in integration of membrane proteins that insert both dependently and independently of the Sec translocase complex, as well as at least some lipoproteins. Aids folding of multispanning membrane proteins. The protein is Membrane protein insertase YidC of Burkholderia orbicola (strain MC0-3).